A 378-amino-acid chain; its full sequence is Beta-1,3-galactosyltransferase 4 (378 aa).

Residues 1–8 are Cytoplasmic-facing; the sequence is MQLRLFRR. A helical; Signal-anchor for type II membrane protein transmembrane segment spans residues 9–19; it reads LLLAALLLVIV. Over 20–378 the chain is Lumenal; the sequence is WTLFGPSGLG…RCRAIAWLQS (359 aa). N-linked (GlcNAc...) asparagine glycosylation is present at Asn-149.

This sequence belongs to the glycosyltransferase 31 family. In terms of tissue distribution, highly expressed in heart, skeletal muscle and pancreas and, to a lesser extent, in brain, placenta, kidney, liver and lung.

It localises to the golgi apparatus membrane. The catalysed reaction is a ganglioside GM2 (d18:1(4E)) + UDP-alpha-D-galactose = a ganglioside GM1 (d18:1(4E)) + UDP + H(+). The enzyme catalyses a ganglioside GM2 + UDP-alpha-D-galactose = a ganglioside GM1 + UDP + H(+). It carries out the reaction a ganglioside GD2 (d18:1(4E)) + UDP-alpha-D-galactose = a ganglioside GD1b (d18:1(4E)) + UDP + H(+). It catalyses the reaction a ganglioside GA2 (d18:1(4E)) + UDP-alpha-D-galactose = a ganglioside GA1 (d18:1(4E)) + UDP + H(+). It participates in protein modification; protein glycosylation. In terms of biological role, involved in GM1/GD1B/GA1 ganglioside biosynthesis. This chain is Beta-1,3-galactosyltransferase 4, found in Homo sapiens (Human).